The following is a 531-amino-acid chain: Protein RPN4 (531 aa).

The segment at 338 to 432 is disordered; it reads RFPSPSTSAN…PSAHTSSSDG (95 aa). The span at 341–354 shows a compositional bias: polar residues; the sequence is SPSTSANVPSTATT. Over residues 362-375 the composition is skewed to low complexity; the sequence is SSSNRSCVSNSNEN. Residues 382-398 carry the Nuclear localization signal motif; the sequence is KKPTSAVVSSNASRRKL. Residues 394-407 show a composition bias toward basic residues; that stretch reads SRRKLINYTKKHLS. Low complexity predominate over residues 408 to 430; it reads SHSSTNSNSKPSTASPSAHTSSS.

In terms of assembly, probably interacts with SEC63. Interacts with MUB1, UBR2 and RPN2. Ubiquitinated by UBR2 in the presence of UBC2; which leads to proteasomal degradation.

Its subcellular location is the nucleus. Its function is as follows. Acts as a transcriptional activator of a number of genes encoding proteasomal subunits. Binds to a PACE (proteasome-associated control element) DNA sequence 5'-GGTGGCAAA-3'. Its expression is in turn regulated by the 26S proteasome, thereby providing a negative feedback control mechanism. Required for normal growth at low temperatures. The chain is Protein RPN4 (RPN4) from Saccharomyces cerevisiae (strain ATCC 204508 / S288c) (Baker's yeast).